Here is a 246-residue protein sequence, read N- to C-terminus: Bis(5'-nucleosyl)-tetraphosphatase PrpE [asymmetrical] (246 aa).

This sequence belongs to the PrpE family. Requires Ni(2+) as cofactor.

The catalysed reaction is P(1),P(4)-bis(5'-guanosyl) tetraphosphate + H2O = GMP + GTP + 2 H(+). Its function is as follows. Asymmetrically hydrolyzes Ap4p to yield AMP and ATP. The polypeptide is Bis(5'-nucleosyl)-tetraphosphatase PrpE [asymmetrical] (Bacillus cereus (strain B4264)).